We begin with the raw amino-acid sequence, 82 residues long: RNA-binding protein Hfq (82 aa).

One can recognise a Sm domain in the interval 11–71; the sequence is DTFLNHVRKT…ISTIMPGAPI (61 aa).

This sequence belongs to the Hfq family. As to quaternary structure, homohexamer.

Functionally, RNA chaperone that binds small regulatory RNA (sRNAs) and mRNAs to facilitate mRNA translational regulation in response to envelope stress, environmental stress and changes in metabolite concentrations. Also binds with high specificity to tRNAs. The sequence is that of RNA-binding protein Hfq from Rhodopseudomonas palustris (strain TIE-1).